Here is a 185-residue protein sequence, read N- to C-terminus: Lysozyme g (185 aa).

Disulfide bonds link Cys4–Cys60 and Cys18–Cys29. The active site involves Glu73.

This sequence belongs to the glycosyl hydrolase 23 family.

Its subcellular location is the secreted. It carries out the reaction Hydrolysis of (1-&gt;4)-beta-linkages between N-acetylmuramic acid and N-acetyl-D-glucosamine residues in a peptidoglycan and between N-acetyl-D-glucosamine residues in chitodextrins.. The protein is Lysozyme g of Cygnus atratus (Black swan).